We begin with the raw amino-acid sequence, 196 residues long: Peptidyl-tRNA hydrolase (196 aa).

Tyrosine 17 is a binding site for tRNA. Residue histidine 22 is the Proton acceptor of the active site. The tRNA site is built by phenylalanine 68, asparagine 70, and asparagine 116.

The protein belongs to the PTH family. In terms of assembly, monomer.

It localises to the cytoplasm. The catalysed reaction is an N-acyl-L-alpha-aminoacyl-tRNA + H2O = an N-acyl-L-amino acid + a tRNA + H(+). Its function is as follows. Hydrolyzes ribosome-free peptidyl-tRNAs (with 1 or more amino acids incorporated), which drop off the ribosome during protein synthesis, or as a result of ribosome stalling. In terms of biological role, catalyzes the release of premature peptidyl moieties from peptidyl-tRNA molecules trapped in stalled 50S ribosomal subunits, and thus maintains levels of free tRNAs and 50S ribosomes. This is Peptidyl-tRNA hydrolase from Yersinia pseudotuberculosis serotype O:1b (strain IP 31758).